A 431-amino-acid polypeptide reads, in one-letter code: Enolase (431 aa).

A (2R)-2-phosphoglycerate-binding site is contributed by Q167. E209 functions as the Proton donor in the catalytic mechanism. 3 residues coordinate Mg(2+): D246, E290, and D317. (2R)-2-phosphoglycerate contacts are provided by K342, R371, S372, and K393. The Proton acceptor role is filled by K342.

Belongs to the enolase family. In terms of assembly, component of the RNA degradosome, a multiprotein complex involved in RNA processing and mRNA degradation. Mg(2+) serves as cofactor.

The protein resides in the cytoplasm. Its subcellular location is the secreted. The protein localises to the cell surface. It catalyses the reaction (2R)-2-phosphoglycerate = phosphoenolpyruvate + H2O. The protein operates within carbohydrate degradation; glycolysis; pyruvate from D-glyceraldehyde 3-phosphate: step 4/5. Functionally, catalyzes the reversible conversion of 2-phosphoglycerate (2-PG) into phosphoenolpyruvate (PEP). It is essential for the degradation of carbohydrates via glycolysis. The sequence is that of Enolase from Yersinia enterocolitica serotype O:8 / biotype 1B (strain NCTC 13174 / 8081).